The primary structure comprises 261 residues: Cytochrome c oxidase subunit 3 (261 aa).

At methionine 1 to proline 15 the chain is on the mitochondrial matrix side. Residues tryptophan 16 to tryptophan 34 traverse the membrane as a helical segment. Over phenylalanine 35–leucine 40 the chain is Mitochondrial intermembrane. Residues threonine 41 to threonine 66 traverse the membrane as a helical segment. Residues phenylalanine 67–threonine 72 lie on the Mitochondrial matrix side of the membrane. A helical membrane pass occupies residues proline 73 to serine 105. The Mitochondrial intermembrane portion of the chain corresponds to leucine 106–glutamate 128. The helical transmembrane segment at valine 129–methionine 152 threads the bilayer. The Mitochondrial matrix portion of the chain corresponds to glutamate 153–glutamate 155. The helical transmembrane segment at arginine 156 to glutamate 183 threads the bilayer. Residues alanine 184–aspartate 190 are Mitochondrial intermembrane-facing. Residues glycine 191–valine 223 traverse the membrane as a helical segment. At glutamine 224–histidine 232 the chain is on the mitochondrial matrix side. Residues phenylalanine 233–isoleucine 256 form a helical membrane-spanning segment. Over tyrosine 257–serine 261 the chain is Mitochondrial intermembrane.

It belongs to the cytochrome c oxidase subunit 3 family. As to quaternary structure, component of the cytochrome c oxidase (complex IV, CIV), a multisubunit enzyme composed of 14 subunits. The complex is composed of a catalytic core of 3 subunits MT-CO1, MT-CO2 and MT-CO3, encoded in the mitochondrial DNA, and 11 supernumerary subunits COX4I, COX5A, COX5B, COX6A, COX6B, COX6C, COX7A, COX7B, COX7C, COX8 and NDUFA4, which are encoded in the nuclear genome. The complex exists as a monomer or a dimer and forms supercomplexes (SCs) in the inner mitochondrial membrane with NADH-ubiquinone oxidoreductase (complex I, CI) and ubiquinol-cytochrome c oxidoreductase (cytochrome b-c1 complex, complex III, CIII), resulting in different assemblies (supercomplex SCI(1)III(2)IV(1) and megacomplex MCI(2)III(2)IV(2)).

The protein localises to the mitochondrion inner membrane. The enzyme catalyses 4 Fe(II)-[cytochrome c] + O2 + 8 H(+)(in) = 4 Fe(III)-[cytochrome c] + 2 H2O + 4 H(+)(out). Its function is as follows. Component of the cytochrome c oxidase, the last enzyme in the mitochondrial electron transport chain which drives oxidative phosphorylation. The respiratory chain contains 3 multisubunit complexes succinate dehydrogenase (complex II, CII), ubiquinol-cytochrome c oxidoreductase (cytochrome b-c1 complex, complex III, CIII) and cytochrome c oxidase (complex IV, CIV), that cooperate to transfer electrons derived from NADH and succinate to molecular oxygen, creating an electrochemical gradient over the inner membrane that drives transmembrane transport and the ATP synthase. Cytochrome c oxidase is the component of the respiratory chain that catalyzes the reduction of oxygen to water. Electrons originating from reduced cytochrome c in the intermembrane space (IMS) are transferred via the dinuclear copper A center (CU(A)) of subunit 2 and heme A of subunit 1 to the active site in subunit 1, a binuclear center (BNC) formed by heme A3 and copper B (CU(B)). The BNC reduces molecular oxygen to 2 water molecules using 4 electrons from cytochrome c in the IMS and 4 protons from the mitochondrial matrix. This Oncorhynchus clarkii (Cutthroat trout) protein is Cytochrome c oxidase subunit 3 (mt-co3).